The following is a 193-amino-acid chain: Phosphoheptose isomerase (193 aa).

The region spanning 37 to 193 is the SIS domain; the sequence is LADSFKAGGK…QLIEKEMVKA (157 aa). 52-54 is a substrate binding site; the sequence is NGG. Positions 61 and 65 each coordinate Zn(2+). Residues Glu-65, 93-94, 119-121, Ser-124, and Gln-172 each bind substrate; these read ND and STS. Positions 172 and 180 each coordinate Zn(2+).

Belongs to the SIS family. GmhA subfamily. In terms of assembly, homotetramer. Zn(2+) serves as cofactor.

The protein resides in the cytoplasm. The catalysed reaction is 2 D-sedoheptulose 7-phosphate = D-glycero-alpha-D-manno-heptose 7-phosphate + D-glycero-beta-D-manno-heptose 7-phosphate. The protein operates within carbohydrate biosynthesis; D-glycero-D-manno-heptose 7-phosphate biosynthesis; D-glycero-alpha-D-manno-heptose 7-phosphate and D-glycero-beta-D-manno-heptose 7-phosphate from sedoheptulose 7-phosphate: step 1/1. Its function is as follows. Catalyzes the isomerization of sedoheptulose 7-phosphate in D-glycero-D-manno-heptose 7-phosphate. The polypeptide is Phosphoheptose isomerase (Yersinia enterocolitica serotype O:8 / biotype 1B (strain NCTC 13174 / 8081)).